An 84-amino-acid chain; its full sequence is MATGTDQVVGLGLVALSLIIFTYYTAWVILLPFIDSQHVIHKYFLPRAYAIAIPLAAGHLLLLFVGIFITYVMLKNQNDTKKTQ.

2 helical membrane-spanning segments follow: residues 11-31 and 49-69; these read LGLV…VILL and YAIA…GIFI.

Belongs to the DPM2 family. Component of the dolichol-phosphate mannose (DPM) synthase complex composed of DPM1, DPM2 and DPM3; in the complex interacts directly with DPM3. Component of the glycosylphosphatidylinositol-N-acetylglucosaminyltransferase (GPI-GnT) complex composed at least by PIGA, PIGC, PIGH, PIGP, PIGQ, PIGY and DPM2. Interacts with PIGA, PIGC and PIGQ.

The protein localises to the endoplasmic reticulum membrane. Its pathway is protein modification; protein glycosylation. In terms of biological role, regulates the biosynthesis of dolichol phosphate-mannose. Regulatory subunit of the dolichol-phosphate mannose (DPM) synthase complex; essential for the ER localization and stable expression of DPM1. Part of the glycosylphosphatidylinositol-N-acetylglucosaminyltransferase (GPI-GnT) complex that catalyzes the transfer of N-acetylglucosamine from UDP-N-acetylglucosamine to phosphatidylinositol and participates in the first step of GPI biosynthesis. May act by regulating the GPI-GNT complex. The polypeptide is Dolichol phosphate-mannose biosynthesis regulatory protein (Bos taurus (Bovine)).